Here is a 222-residue protein sequence, read N- to C-terminus: 7-cyano-7-deazaguanine synthase (222 aa).

ATP is bound at residue 14-24; sequence FSGGQDSTTCL. Residues Cys190, Cys199, Cys202, and Cys205 each contribute to the Zn(2+) site.

Belongs to the QueC family. As to quaternary structure, homodimer. Zn(2+) serves as cofactor.

The catalysed reaction is 7-carboxy-7-deazaguanine + NH4(+) + ATP = 7-cyano-7-deazaguanine + ADP + phosphate + H2O + H(+). Its pathway is purine metabolism; 7-cyano-7-deazaguanine biosynthesis. In terms of biological role, catalyzes the ATP-dependent conversion of 7-carboxy-7-deazaguanine (CDG) to 7-cyano-7-deazaguanine (preQ(0)). This chain is 7-cyano-7-deazaguanine synthase, found in Staphylococcus aureus (strain bovine RF122 / ET3-1).